A 398-amino-acid polypeptide reads, in one-letter code: S-adenosylmethionine synthase (398 aa).

Histidine 16 serves as a coordination point for ATP. Aspartate 18 contacts Mg(2+). A K(+)-binding site is contributed by glutamate 51. L-methionine is bound by residues glutamate 64 and glutamine 108. Residues glutamine 108–alanine 118 are flexible loop. ATP contacts are provided by residues aspartate 176–lysine 178, lysine 242–phenylalanine 243, aspartate 251, arginine 257–lysine 258, alanine 274, and lysine 278. Aspartate 251 serves as a coordination point for L-methionine. Lysine 282 lines the L-methionine pocket.

This sequence belongs to the AdoMet synthase family. As to quaternary structure, homotetramer; dimer of dimers. Requires Mg(2+) as cofactor. It depends on K(+) as a cofactor.

It localises to the cytoplasm. The enzyme catalyses L-methionine + ATP + H2O = S-adenosyl-L-methionine + phosphate + diphosphate. The protein operates within amino-acid biosynthesis; S-adenosyl-L-methionine biosynthesis; S-adenosyl-L-methionine from L-methionine: step 1/1. Functionally, catalyzes the formation of S-adenosylmethionine (AdoMet) from methionine and ATP. The overall synthetic reaction is composed of two sequential steps, AdoMet formation and the subsequent tripolyphosphate hydrolysis which occurs prior to release of AdoMet from the enzyme. The protein is S-adenosylmethionine synthase of Nitrobacter hamburgensis (strain DSM 10229 / NCIMB 13809 / X14).